Here is a 158-residue protein sequence, read N- to C-terminus: Cyclic pyranopterin monophosphate synthase (158 aa).

Residues Met-74–His-76 and Met-112–Glu-113 contribute to the substrate site. The active site involves Asp-127.

It belongs to the MoaC family. As to quaternary structure, homohexamer; trimer of dimers.

It catalyses the reaction (8S)-3',8-cyclo-7,8-dihydroguanosine 5'-triphosphate = cyclic pyranopterin phosphate + diphosphate. It participates in cofactor biosynthesis; molybdopterin biosynthesis. Functionally, catalyzes the conversion of (8S)-3',8-cyclo-7,8-dihydroguanosine 5'-triphosphate to cyclic pyranopterin monophosphate (cPMP). This chain is Cyclic pyranopterin monophosphate synthase, found in Helicobacter pylori (strain P12).